The primary structure comprises 119 residues: Large ribosomal subunit protein bL20 (119 aa).

It belongs to the bacterial ribosomal protein bL20 family.

Binds directly to 23S ribosomal RNA and is necessary for the in vitro assembly process of the 50S ribosomal subunit. It is not involved in the protein synthesizing functions of that subunit. This is Large ribosomal subunit protein bL20 from Bradyrhizobium sp. (strain ORS 278).